Reading from the N-terminus, the 1174-residue chain is Creatine kinase, flagellar (1174 aa).

The span at 1–14 (MGCAASSQQTTATG) shows a compositional bias: polar residues. The tract at residues 1-62 (MGCAASSQQT…PFVEPDPNYP (62 aa)) is disordered. Positions 18 to 39 (AAGEKANPAPANNNPNAANKAE) are enriched in low complexity. The Phosphagen kinase N-terminal 1 domain maps to 53-139 (PFVEPDPNYP…FDPTIDKRHN (87 aa)). Residues 61–414 (YPDLSKHNNY…EKALEKGSDI (354 aa)) form a 1; approximate repeat. The 243-residue stretch at 166 to 408 (YVLSCRVRTG…KKLIELEKAL (243 aa)) folds into the Phosphagen kinase C-terminal 1 domain. ATP contacts are provided by residues 169 to 173 (SCRVR), His-232, Arg-277, and 333 to 337 (RAGVH). A Phosphagen kinase N-terminal 2 domain is found at 426–512 (RAEQVKEGYP…FDPVIDARHG (87 aa)). Residues 434–787 (YPDLSKHNNH…EKKLEKGEDI (354 aa)) form a 2; approximate repeat. In terms of domain architecture, Phosphagen kinase C-terminal 2 spans 539–781 (YVLSCRVRTG…ELLVQMEKKL (243 aa)). ATP contacts are provided by residues 542 to 546 (SCRVR), His-605, Arg-706, 734 to 739 (RGTGGV), and Asp-749. Positions 800–886 (PIKPFSYDYP…FDPVISARHG (87 aa)) constitute a Phosphagen kinase N-terminal 3 domain. The stretch at 808–1161 (YPDFSLHNNW…EKALMKGEDI (354 aa)) is one 3; approximate repeat. The Phosphagen kinase C-terminal 3 domain maps to 913-1155 (FVLSCRVRTG…KLLVNLEKAL (243 aa)).

Belongs to the ATP:guanido phosphotransferase family. As to quaternary structure, monomer.

It is found in the cytoplasm. It localises to the cytoskeleton. Its subcellular location is the flagellum axoneme. The enzyme catalyses creatine + ATP = N-phosphocreatine + ADP + H(+). In terms of biological role, this axonemal protein participates in an energy shuttle that utilizes phosphocreatine to transfer the energy from ATP generated by the mitochondrion in the sperm head to dynein in the distal portions of the flagellum. The polypeptide is Creatine kinase, flagellar (Strongylocentrotus purpuratus (Purple sea urchin)).